A 542-amino-acid polypeptide reads, in one-letter code: Chaperonin GroEL 1 (542 aa).

ATP is bound by residues Thr-29–Pro-32, Asp-86–Thr-90, Gly-413, Asn-477–Ala-479, and Asp-493.

This sequence belongs to the chaperonin (HSP60) family. Forms a cylinder of 14 subunits composed of two heptameric rings stacked back-to-back. Interacts with the co-chaperonin GroES.

It localises to the cytoplasm. It catalyses the reaction ATP + H2O + a folded polypeptide = ADP + phosphate + an unfolded polypeptide.. Functionally, together with its co-chaperonin GroES, plays an essential role in assisting protein folding. The GroEL-GroES system forms a nano-cage that allows encapsulation of the non-native substrate proteins and provides a physical environment optimized to promote and accelerate protein folding. The polypeptide is Chaperonin GroEL 1 (Kineococcus radiotolerans (strain ATCC BAA-149 / DSM 14245 / SRS30216)).